A 203-amino-acid polypeptide reads, in one-letter code: Proteasome subunit beta 1 (203 aa).

Residues methionine 1–glycine 7 constitute a propeptide, removed in mature form; by autocatalysis. Threonine 8 functions as the Nucleophile in the catalytic mechanism.

This sequence belongs to the peptidase T1B family. As to quaternary structure, the 20S proteasome core is composed of 14 alpha and 14 beta subunits that assemble into four stacked heptameric rings, resulting in a barrel-shaped structure. The two inner rings, each composed of seven catalytic beta subunits, are sandwiched by two outer rings, each composed of seven alpha subunits. The catalytic chamber with the active sites is on the inside of the barrel. Has a gated structure, the ends of the cylinder being occluded by the N-termini of the alpha-subunits. Is capped at one or both ends by the proteasome regulatory ATPase, PAN.

The protein localises to the cytoplasm. The enzyme catalyses Cleavage of peptide bonds with very broad specificity.. Its activity is regulated as follows. The formation of the proteasomal ATPase PAN-20S proteasome complex, via the docking of the C-termini of PAN into the intersubunit pockets in the alpha-rings, triggers opening of the gate for substrate entry. Interconversion between the open-gate and close-gate conformations leads to a dynamic regulation of the 20S proteasome proteolysis activity. Functionally, component of the proteasome core, a large protease complex with broad specificity involved in protein degradation. The polypeptide is Proteasome subunit beta 1 (Thermococcus onnurineus (strain NA1)).